We begin with the raw amino-acid sequence, 180 residues long: Large ribosomal subunit protein uL5 (180 aa).

It belongs to the universal ribosomal protein uL5 family. Part of the 50S ribosomal subunit; part of the 5S rRNA/L5/L18/L25 subcomplex. Contacts the 5S rRNA and the P site tRNA. Forms a bridge to the 30S subunit in the 70S ribosome.

This is one of the proteins that bind and probably mediate the attachment of the 5S RNA into the large ribosomal subunit, where it forms part of the central protuberance. In the 70S ribosome it contacts protein S13 of the 30S subunit (bridge B1b), connecting the 2 subunits; this bridge is implicated in subunit movement. Contacts the P site tRNA; the 5S rRNA and some of its associated proteins might help stabilize positioning of ribosome-bound tRNAs. This is Large ribosomal subunit protein uL5 from Chlamydia caviae (strain ATCC VR-813 / DSM 19441 / 03DC25 / GPIC) (Chlamydophila caviae).